We begin with the raw amino-acid sequence, 758 residues long: 5-methyltetrahydropteroyltriglutamate--homocysteine methyltransferase (758 aa).

5-methyltetrahydropteroyltri-L-glutamate is bound by residues 17–20 (RELK) and Lys114. L-homocysteine contacts are provided by residues 429–431 (IGS) and Glu482. L-methionine-binding positions include 429 to 431 (IGS) and Glu482. 5-methyltetrahydropteroyltri-L-glutamate contacts are provided by residues 513–514 (RC) and Trp559. Asp597 is a binding site for L-homocysteine. Asp597 provides a ligand contact to L-methionine. Glu603 provides a ligand contact to 5-methyltetrahydropteroyltri-L-glutamate. Zn(2+)-binding residues include His639, Cys641, and Glu663. His692 functions as the Proton donor in the catalytic mechanism. Cys724 contacts Zn(2+).

Belongs to the vitamin-B12 independent methionine synthase family. It depends on Zn(2+) as a cofactor.

The catalysed reaction is 5-methyltetrahydropteroyltri-L-glutamate + L-homocysteine = tetrahydropteroyltri-L-glutamate + L-methionine. Its pathway is amino-acid biosynthesis; L-methionine biosynthesis via de novo pathway; L-methionine from L-homocysteine (MetE route): step 1/1. Functionally, catalyzes the transfer of a methyl group from 5-methyltetrahydrofolate to homocysteine resulting in methionine formation. In Buchnera aphidicola subsp. Acyrthosiphon pisum (strain APS) (Acyrthosiphon pisum symbiotic bacterium), this protein is 5-methyltetrahydropteroyltriglutamate--homocysteine methyltransferase.